Reading from the N-terminus, the 310-residue chain is Carbamate kinase (310 aa).

It belongs to the carbamate kinase family. As to quaternary structure, homodimer.

It is found in the cytoplasm. It catalyses the reaction hydrogencarbonate + NH4(+) + ATP = carbamoyl phosphate + ADP + H2O + H(+). It functions in the pathway amino-acid degradation; L-arginine degradation via ADI pathway. This chain is Carbamate kinase, found in Haemophilus influenzae (strain ATCC 51907 / DSM 11121 / KW20 / Rd).